A 404-amino-acid polypeptide reads, in one-letter code: Cysteine desulfurase IscS (404 aa).

Residues 75–76 (AT), Asn-155, Gln-183, and 203–205 (SGH) contribute to the pyridoxal 5'-phosphate site. Lys-206 carries the N6-(pyridoxal phosphate)lysine modification. Thr-243 is a pyridoxal 5'-phosphate binding site. The Cysteine persulfide intermediate role is filled by Cys-328. [2Fe-2S] cluster is bound at residue Cys-328.

Belongs to the class-V pyridoxal-phosphate-dependent aminotransferase family. NifS/IscS subfamily. As to quaternary structure, homodimer. Forms a heterotetramer with IscU, interacts with other sulfur acceptors. The cofactor is pyridoxal 5'-phosphate.

The protein resides in the cytoplasm. It carries out the reaction (sulfur carrier)-H + L-cysteine = (sulfur carrier)-SH + L-alanine. It functions in the pathway cofactor biosynthesis; iron-sulfur cluster biosynthesis. Functionally, master enzyme that delivers sulfur to a number of partners involved in Fe-S cluster assembly, tRNA modification or cofactor biosynthesis. Catalyzes the removal of elemental sulfur and selenium atoms from cysteine and selenocysteine to produce alanine. Functions as a sulfur delivery protein for Fe-S cluster synthesis onto IscU, an Fe-S scaffold assembly protein, as well as other S acceptor proteins. Also functions as a selenium delivery protein in the pathway for the biosynthesis of selenophosphate. In Salmonella schwarzengrund (strain CVM19633), this protein is Cysteine desulfurase IscS.